Here is a 311-residue protein sequence, read N- to C-terminus: Ribonuclease HIII (311 aa).

The RNase H type-2 domain occupies 95-311 (MSIVGSDEVG…NTEKAFRLLK (217 aa)). A divalent metal cation contacts are provided by aspartate 101, glutamate 102, and aspartate 206.

It belongs to the RNase HII family. RnhC subfamily. Mn(2+) is required as a cofactor. The cofactor is Mg(2+).

It is found in the cytoplasm. It catalyses the reaction Endonucleolytic cleavage to 5'-phosphomonoester.. Endonuclease that specifically degrades the RNA of RNA-DNA hybrids. The sequence is that of Ribonuclease HIII from Bacillus thuringiensis subsp. konkukian (strain 97-27).